The following is a 573-amino-acid chain: Isocitrate dehydrogenase kinase/phosphatase (573 aa).

ATP-binding positions include 315-321 (APGIRGM) and K336. D371 is an active-site residue.

It belongs to the AceK family.

The protein resides in the cytoplasm. It carries out the reaction L-seryl-[isocitrate dehydrogenase] + ATP = O-phospho-L-seryl-[isocitrate dehydrogenase] + ADP + H(+). Functionally, bifunctional enzyme which can phosphorylate or dephosphorylate isocitrate dehydrogenase (IDH) on a specific serine residue. This is a regulatory mechanism which enables bacteria to bypass the Krebs cycle via the glyoxylate shunt in response to the source of carbon. When bacteria are grown on glucose, IDH is fully active and unphosphorylated, but when grown on acetate or ethanol, the activity of IDH declines drastically concomitant with its phosphorylation. The chain is Isocitrate dehydrogenase kinase/phosphatase from Enterobacter sp. (strain 638).